We begin with the raw amino-acid sequence, 341 residues long: tRNA N6-adenosine threonylcarbamoyltransferase (341 aa).

Residues histidine 111 and histidine 115 each contribute to the Fe cation site. Substrate contacts are provided by residues 134–138 (LVSGG), aspartate 167, glycine 180, and asparagine 272. Aspartate 300 serves as a coordination point for Fe cation.

This sequence belongs to the KAE1 / TsaD family. Fe(2+) is required as a cofactor.

Its subcellular location is the cytoplasm. It carries out the reaction L-threonylcarbamoyladenylate + adenosine(37) in tRNA = N(6)-L-threonylcarbamoyladenosine(37) in tRNA + AMP + H(+). Its function is as follows. Required for the formation of a threonylcarbamoyl group on adenosine at position 37 (t(6)A37) in tRNAs that read codons beginning with adenine. Is involved in the transfer of the threonylcarbamoyl moiety of threonylcarbamoyl-AMP (TC-AMP) to the N6 group of A37, together with TsaE and TsaB. TsaD likely plays a direct catalytic role in this reaction. The chain is tRNA N6-adenosine threonylcarbamoyltransferase from Blochmanniella pennsylvanica (strain BPEN).